The chain runs to 487 residues: Glutamyl-tRNA(Gln) amidotransferase subunit A (487 aa).

Catalysis depends on charge relay system residues K80 and S155. S179 acts as the Acyl-ester intermediate in catalysis.

It belongs to the amidase family. GatA subfamily. Heterotrimer of A, B and C subunits.

The enzyme catalyses L-glutamyl-tRNA(Gln) + L-glutamine + ATP + H2O = L-glutaminyl-tRNA(Gln) + L-glutamate + ADP + phosphate + H(+). Functionally, allows the formation of correctly charged Gln-tRNA(Gln) through the transamidation of misacylated Glu-tRNA(Gln) in organisms which lack glutaminyl-tRNA synthetase. The reaction takes place in the presence of glutamine and ATP through an activated gamma-phospho-Glu-tRNA(Gln). The protein is Glutamyl-tRNA(Gln) amidotransferase subunit A of Leptospira interrogans serogroup Icterohaemorrhagiae serovar copenhageni (strain Fiocruz L1-130).